A 185-amino-acid chain; its full sequence is Ribosome-recycling factor (185 aa).

Belongs to the RRF family.

It is found in the cytoplasm. Responsible for the release of ribosomes from messenger RNA at the termination of protein biosynthesis. May increase the efficiency of translation by recycling ribosomes from one round of translation to another. The chain is Ribosome-recycling factor from Halothermothrix orenii (strain H 168 / OCM 544 / DSM 9562).